The primary structure comprises 434 residues: UPF0053 protein YrkA (434 aa).

Residues 1–201 (MTTINLIIFT…YKSGEINQNE (201 aa)) enclose the CNNM transmembrane domain. Transmembrane regions (helical) follow at residues 7–27 (IIFTLLIVLTAFFVATEFAIV), 64–84 (LGITVTALGIGWVGESTFEVI), and 101–121 (VLILVIAFVMATFLHVVVGEL). CBS domains follow at residues 220 to 282 (MIPR…KIKE) and 289 to 346 (HINP…IRDE).

This sequence belongs to the UPF0053 family.

The protein localises to the cell membrane. The sequence is that of UPF0053 protein YrkA (yrkA) from Bacillus subtilis (strain 168).